Here is a 125-residue protein sequence, read N- to C-terminus: UPF0763 protein NAMH_0545 (125 aa).

Belongs to the UPF0763 family.

The chain is UPF0763 protein NAMH_0545 from Nautilia profundicola (strain ATCC BAA-1463 / DSM 18972 / AmH).